The sequence spans 145 residues: MIALIQRVTQANVVVKNEVVGEIGHGLLVLLGVEKGDDQQKAKRLCEKVIGYRIFSDEQDKMNLNVQQIGGSLLVVSQFTLAADTQKGMRPSFSGGAAPDKADELYRYFVEQCRQSGVKTEIGRFAADMKVSLTNDGPVTFWLQV.

The short motif at 137–138 is the Gly-cisPro motif, important for rejection of L-amino acids element; it reads GP.

The protein belongs to the DTD family. Homodimer.

The protein resides in the cytoplasm. The catalysed reaction is glycyl-tRNA(Ala) + H2O = tRNA(Ala) + glycine + H(+). It catalyses the reaction a D-aminoacyl-tRNA + H2O = a tRNA + a D-alpha-amino acid + H(+). In terms of biological role, an aminoacyl-tRNA editing enzyme that deacylates mischarged D-aminoacyl-tRNAs. Also deacylates mischarged glycyl-tRNA(Ala), protecting cells against glycine mischarging by AlaRS. Acts via tRNA-based rather than protein-based catalysis; rejects L-amino acids rather than detecting D-amino acids in the active site. By recycling D-aminoacyl-tRNA to D-amino acids and free tRNA molecules, this enzyme counteracts the toxicity associated with the formation of D-aminoacyl-tRNA entities in vivo and helps enforce protein L-homochirality. The chain is D-aminoacyl-tRNA deacylase from Photorhabdus laumondii subsp. laumondii (strain DSM 15139 / CIP 105565 / TT01) (Photorhabdus luminescens subsp. laumondii).